A 289-amino-acid chain; its full sequence is ATP phosphoribosyltransferase (289 aa).

This sequence belongs to the ATP phosphoribosyltransferase family. Long subfamily. It depends on Mg(2+) as a cofactor.

It is found in the cytoplasm. It carries out the reaction 1-(5-phospho-beta-D-ribosyl)-ATP + diphosphate = 5-phospho-alpha-D-ribose 1-diphosphate + ATP. It functions in the pathway amino-acid biosynthesis; L-histidine biosynthesis; L-histidine from 5-phospho-alpha-D-ribose 1-diphosphate: step 1/9. With respect to regulation, feedback inhibited by histidine. Catalyzes the condensation of ATP and 5-phosphoribose 1-diphosphate to form N'-(5'-phosphoribosyl)-ATP (PR-ATP). Has a crucial role in the pathway because the rate of histidine biosynthesis seems to be controlled primarily by regulation of HisG enzymatic activity. The sequence is that of ATP phosphoribosyltransferase from Methanosarcina barkeri (strain Fusaro / DSM 804).